The primary structure comprises 436 residues: Adenylosuccinate synthetase (436 aa).

GTP contacts are provided by residues 12–18 and 40–42; these read GDEGKGK and GHT. Asp13 functions as the Proton acceptor in the catalytic mechanism. Asp13 and Gly40 together coordinate Mg(2+). IMP is bound by residues 13 to 16, 38 to 41, Thr128, Arg142, Gln223, Thr238, and Arg302; these read DEGK and NAGH. His41 (proton donor) is an active-site residue. 298–304 is a binding site for substrate; the sequence is TTTGRRR. Residues Arg304, 330–332, and 412–414 contribute to the GTP site; these read KLD and SLG.

Belongs to the adenylosuccinate synthetase family. In terms of assembly, homodimer. It depends on Mg(2+) as a cofactor.

It is found in the cytoplasm. It carries out the reaction IMP + L-aspartate + GTP = N(6)-(1,2-dicarboxyethyl)-AMP + GDP + phosphate + 2 H(+). It participates in purine metabolism; AMP biosynthesis via de novo pathway; AMP from IMP: step 1/2. Its function is as follows. Plays an important role in the de novo pathway of purine nucleotide biosynthesis. Catalyzes the first committed step in the biosynthesis of AMP from IMP. This is Adenylosuccinate synthetase from Prochlorococcus marinus (strain MIT 9301).